The sequence spans 176 residues: Dynein light chain Tctex-type 5-B (176 aa).

This sequence belongs to the dynein light chain Tctex-type family.

The chain is Dynein light chain Tctex-type 5-B (Dynlt5-b) from Xenopus laevis (African clawed frog).